Reading from the N-terminus, the 549-residue chain is Eukaryotic translation initiation factor 4B2 (549 aa).

Disordered regions lie at residues 1 to 446 and 465 to 549; these read MSKP…DLIR and FRPR…REGW. Over residues 24 to 46 the composition is skewed to low complexity; it reads AEATATAADSQSFPSLKEAATAK. Composition is skewed to gly residues over residues 96-109 and 126-136; these read RLGG…GGRS and SWGGGGGGRRS. Positions 169–176 match the Nuclear localization signal 1 motif; that stretch reads GKKSLPSF. Residues 184 to 218 show a composition bias toward gly residues; the sequence is RYGGGGGSFGGGGGGGAGSYGGGGAGAGSGGGGGF. The short motif at 234-241 is the Nuclear localization signal 2 element; that stretch reads SSTFGSGF. A compositionally biased stretch (basic and acidic residues) spans 263–278; that stretch reads QEERRRLVFEPRKADT. The span at 281–292 shows a compositional bias: polar residues; sequence SETPTAVKTSKP. Residues 299–323 are compositionally biased toward basic and acidic residues; it reads RPREQVLAEKGLDWKKLDSDIEAKK. The span at 327 to 349 shows a compositional bias: low complexity; it reads SRPSSAQSSRPSSAQSNRSESSA. Basic and acidic residues-rich tracts occupy residues 369 to 431, 485 to 507, and 518 to 549; these read AKPR…KESQ, ERPH…ERPR, and PVDD…REGW.

Belongs to the eIF-4 subunit B family. Homodimer. Nonspherical monomer. mRNA-discriminating component of initiation complexes. Phosphorylated.

It is found in the nucleus. In terms of biological role, promotes the eIF4F and eIF4A RNA-dependent ATP-hydrolysis activity with different efficiency depending on mRNAs, thus providing mRNA discrimination during initiation of translation. This chain is Eukaryotic translation initiation factor 4B2, found in Arabidopsis thaliana (Mouse-ear cress).